A 423-amino-acid polypeptide reads, in one-letter code: GTPase HflX (423 aa).

Residues Pro202 to Lys366 enclose the Hflx-type G domain. GTP is bound by residues Gly208–Ser215, Phe233–Asp237, Asp255–Gly258, Asn321–Asp324, and Ser344–Lys346. The Mg(2+) site is built by Ser215 and Thr235.

It belongs to the TRAFAC class OBG-HflX-like GTPase superfamily. HflX GTPase family. In terms of assembly, monomer. Associates with the 50S ribosomal subunit. The cofactor is Mg(2+).

The protein localises to the cytoplasm. In terms of biological role, GTPase that associates with the 50S ribosomal subunit and may have a role during protein synthesis or ribosome biogenesis. This is GTPase HflX from Lacrimispora saccharolytica (strain ATCC 35040 / DSM 2544 / NRCC 2533 / WM1) (Clostridium saccharolyticum).